Here is a 410-residue protein sequence, read N- to C-terminus: E3 ubiquitin-protein ligase ICP0 (410 aa).

The RING-type zinc-finger motif lies at 46 to 85 (CPICLDVAATEAQTLPCMHKFCLDCIQRWTLTSTACPLCN). The tract at residues 243-410 (TSESEAHSDS…IFIDLTQDDD (168 aa)) is disordered. Residues 287–315 (APRRSPRRARRAAVLRREQRRTRCLRRGR) are compositionally biased toward basic residues. Low complexity-rich tracts occupy residues 329–340 (SSGEGSSAQHGA) and 348–399 (GSAN…PRSA).

Auto-ubiquitinated.

It carries out the reaction S-ubiquitinyl-[E2 ubiquitin-conjugating enzyme]-L-cysteine + [acceptor protein]-L-lysine = [E2 ubiquitin-conjugating enzyme]-L-cysteine + N(6)-ubiquitinyl-[acceptor protein]-L-lysine.. In terms of biological role, evades nuclear antiviral defenses triggered by dsDNA viruses. Acts during the initial stages of lytic infection and the reactivation of latent viral genome. Prevents the antiviral effect of nuclear bodies by degrading host PML and SP100. The protein is E3 ubiquitin-protein ligase ICP0 (EP0) of Sus scrofa (Pig).